A 118-amino-acid polypeptide reads, in one-letter code: Late cornified envelope protein 1F (118 aa).

A compositionally biased stretch (low complexity) spans 1-10 (MSCQQSQQQC). Disordered stretches follow at residues 1-23 (MSCQ…CPPK) and 82-118 (RRRS…GGCC). A compositionally biased stretch (pro residues) spans 11–23 (QPPPKCTPKCPPK). Residues 95–104 (CCSQPSAGSS) show a composition bias toward low complexity. Residues 105–118 (CCGGGSGQHSGGCC) show a composition bias toward gly residues.

This sequence belongs to the LCE family. As to expression, skin-specific. Expression was readily detected in adult trunk skin, adult arm skin, fetal skin, penal skin, vulva, esophagus and tongue. Not expressed in the cervix, rectum, lung, colon, or placenta. Expression is observed in the fibroblasts.

Precursors of the cornified envelope of the stratum corneum. This Homo sapiens (Human) protein is Late cornified envelope protein 1F (LCE1F).